We begin with the raw amino-acid sequence, 560 residues long: NAD-dependent malic enzyme (560 aa).

Y100 serves as the catalytic Proton donor. R153 serves as a coordination point for NAD(+). K171 acts as the Proton acceptor in catalysis. Positions 242, 243, and 266 each coordinate a divalent metal cation. Positions 266 and 413 each coordinate NAD(+).

It belongs to the malic enzymes family. Homotetramer. The cofactor is Mg(2+). Requires Mn(2+) as cofactor.

The catalysed reaction is (S)-malate + NAD(+) = pyruvate + CO2 + NADH. The enzyme catalyses oxaloacetate + H(+) = pyruvate + CO2. The protein is NAD-dependent malic enzyme of Psychrobacter arcticus (strain DSM 17307 / VKM B-2377 / 273-4).